The sequence spans 456 residues: tRNA modification GTPase MnmE (456 aa).

(6S)-5-formyl-5,6,7,8-tetrahydrofolate-binding residues include Arg25, Glu82, and Lys121. One can recognise a TrmE-type G domain in the interval 217 to 379; it reads GMKVVIAGRP…LKAHLKSVMG (163 aa). Residue Asn227 coordinates K(+). GTP-binding positions include 227 to 232, 246 to 252, and 271 to 274; these read NAGKSS, TNIAGTT, and DTAG. Residue Ser231 coordinates Mg(2+). Residues Thr246, Ile248, and Thr251 each coordinate K(+). Residue Thr252 participates in Mg(2+) binding. Lys456 is a (6S)-5-formyl-5,6,7,8-tetrahydrofolate binding site.

The protein belongs to the TRAFAC class TrmE-Era-EngA-EngB-Septin-like GTPase superfamily. TrmE GTPase family. Homodimer. Heterotetramer of two MnmE and two MnmG subunits. The cofactor is K(+).

It localises to the cytoplasm. In terms of biological role, exhibits a very high intrinsic GTPase hydrolysis rate. Involved in the addition of a carboxymethylaminomethyl (cmnm) group at the wobble position (U34) of certain tRNAs, forming tRNA-cmnm(5)s(2)U34. This Saccharophagus degradans (strain 2-40 / ATCC 43961 / DSM 17024) protein is tRNA modification GTPase MnmE.